The sequence spans 500 residues: 4-aminobutyrate aminotransferase, mitochondrial (500 aa).

A mitochondrion-targeting transit peptide spans 1-27 (MAFLLTTRRLVCSSQKNLHLFTPGSRY). Residue C163 coordinates [2Fe-2S] cluster. 164–165 (GS) is a binding site for pyridoxal 5'-phosphate. Residue C166 participates in [2Fe-2S] cluster binding. R220 lines the substrate pocket. K231 bears the N6-succinyllysine mark. K252 is subject to N6-acetyllysine; alternate. An N6-succinyllysine; alternate modification is found at K252. 2 positions are modified to N6-acetyllysine: K279 and K318. Residue K357 is modified to N6-(pyridoxal phosphate)lysine. A pyridoxal 5'-phosphate-binding site is contributed by T381. Residue K413 is modified to N6-acetyllysine; alternate. At K413 the chain carries N6-succinyllysine; alternate. N6-acetyllysine is present on residues K452 and K470.

It belongs to the class-III pyridoxal-phosphate-dependent aminotransferase family. As to quaternary structure, homodimer; disulfide-linked. Pyridoxal 5'-phosphate serves as cofactor. It depends on [2Fe-2S] cluster as a cofactor.

The protein resides in the mitochondrion matrix. The enzyme catalyses 4-aminobutanoate + 2-oxoglutarate = succinate semialdehyde + L-glutamate. It carries out the reaction (S)-3-amino-2-methylpropanoate + 2-oxoglutarate = 2-methyl-3-oxopropanoate + L-glutamate. Its function is as follows. Catalyzes the conversion of gamma-aminobutyrate and L-beta-aminoisobutyrate to succinate semialdehyde and methylmalonate semialdehyde, respectively. Can also convert delta-aminovalerate and beta-alanine. The protein is 4-aminobutyrate aminotransferase, mitochondrial of Rattus norvegicus (Rat).